Reading from the N-terminus, the 92-residue chain is DNA-binding protein HU (92 aa).

It belongs to the bacterial histone-like protein family. As to quaternary structure, homodimer.

Functionally, histone-like DNA-binding protein which is capable of wrapping DNA to stabilize it, and thus to prevent its denaturation under extreme environmental conditions. This Buchnera aphidicola subsp. Acyrthosiphon pisum (strain APS) (Acyrthosiphon pisum symbiotic bacterium) protein is DNA-binding protein HU (hup).